Consider the following 448-residue polypeptide: TRAF family member-associated NF-kappa-B activator (448 aa).

The necessary for interaction with ZC3H12A stretch occupies residues 35 to 65 (MDKNIGEQLNRAYEAFRQACMDRDSAVRELQ). A coiled-coil region spans residues 60–98 (AVRELQQKQTENYEQRIREQQEQLSFQQNLIDRLKSQLL). A necessary for interaction with TRAF6 region spans residues 105 to 224 (DNSYGYVPLL…QCTDKTEKQE (120 aa)). The segment at 166-205 (HERDNIEKTFWDLKEEFHRICLLAKAQKDHLSKLNIPDIA) is interaction with TBK1 and IKBKE. Residues 205–224 (ATDTQCSVPIQCTDKTEKQE) are TRAF family member interaction. At S211 the chain carries Phosphoserine. Position 246 is a phosphothreonine (T246). Phosphoserine occurs at positions 258, 261, 377, and 380. Residues 416–443 (PLVCEFCQELFPPSITSRGDFLRHLNTH) form a UBZ1-type zinc finger. Residues C419, C422, H439, and H443 each coordinate Zn(2+).

As to quaternary structure, homodimer. Found in a deubiquitination complex with TANK, USP10 and ZC3H12A; this complex inhibits genotoxic stress- or interleukin-1-beta-mediated NF-kappaB activation by promoting IKBKG or TRAF6 deubiquitination. Interacts with IKBKG; this interaction increases in response to DNA damage. Interacts with TRAF6; this interaction increases in response to DNA damage and recruits USP10 to the ubiquitinated TRAF6. Interacts with USP10; this interaction increases in response to DNA damage. Interacts with TBK1 and IKBKE. Also interacts with TRAF1, TRAF2, and TRAF3 by binding to their TRAF-C domains; the interaction with TRAF2 is disrupted by the phosphorylation of TANK by IKBKE. Interacts more strongly with TRAF1 and TRAF2 than TRAF3. Part of a ternary complex consisting of TANK, IKBKB and IKBKG. Interacts with IKBKG; the interaction is enhanced by IKBKE and TBK1. In terms of tissue distribution, heart, brain, spleen, lung, liver, skeletal muscle, kidney and testis.

The protein resides in the cytoplasm. Functionally, adapter protein involved in I-kappa-B-kinase (IKK) regulation which constitutively binds TBK1 and IKBKE playing a role in antiviral innate immunity. Acts as a regulator of TRAF function by maintaining them in a latent state. Blocks TRAF2 binding to LMP1 and inhibits LMP1-mediated NF-kappa-B activation. Negatively regulates NF-kappaB signaling and cell survival upon DNA damage. Plays a role as an adapter to assemble ZC3H12A, USP10 in a deubiquitination complex which plays a negative feedback response to attenuate NF-kappaB activation through the deubiquitination of IKBKG or TRAF6 in response to interleukin-1-beta (IL1B) stimulation or upon DNA damage. Promotes UBP10-induced deubiquitination of TRAF6 in response to DNA damage. May control negatively TRAF2-mediated NF-kappa-B activation signaled by CD40, TNFR1 and TNFR2. Essential for the efficient induction of IRF-dependent transcription following infection with Sendai virus. This is TRAF family member-associated NF-kappa-B activator (Tank) from Mus musculus (Mouse).